We begin with the raw amino-acid sequence, 473 residues long: Mitochondrial distribution and morphology protein 10 (473 aa).

Belongs to the MDM10 family. Component of the ER-mitochondria encounter structure (ERMES) or MDM complex, composed of MMM1, MDM10, MDM12 and MDM34. Associates with the mitochondrial outer membrane sorting assembly machinery SAM(core) complex.

The protein resides in the mitochondrion outer membrane. Component of the ERMES/MDM complex, which serves as a molecular tether to connect the endoplasmic reticulum and mitochondria. Components of this complex are involved in the control of mitochondrial shape and protein biogenesis and may function in phospholipid exchange. MDM10 is involved in the late assembly steps of the general translocase of the mitochondrial outer membrane (TOM complex). Functions in the TOM40-specific route of the assembly of outer membrane beta-barrel proteins, including the association of TOM40 with the receptor TOM22 and small TOM proteins. Can associate with the SAM(core) complex as well as the MDM12-MMM1 complex, both involved in late steps of the major beta-barrel assembly pathway, that is responsible for biogenesis of all outer membrane beta-barrel proteins. May act as a switch that shuttles between both complexes and channels precursor proteins into the TOM40-specific pathway. Plays a role in mitochondrial morphology and in the inheritance of mitochondria. The chain is Mitochondrial distribution and morphology protein 10 from Candida albicans (strain SC5314 / ATCC MYA-2876) (Yeast).